A 279-amino-acid polypeptide reads, in one-letter code: Small ribosomal subunit protein uS2 (279 aa).

The tract at residues 232–260 (KVDMEAAGENAPKGAGKKKNTKARMDKAE) is disordered.

It belongs to the universal ribosomal protein uS2 family.

The chain is Small ribosomal subunit protein uS2 from Phocaeicola vulgatus (strain ATCC 8482 / DSM 1447 / JCM 5826 / CCUG 4940 / NBRC 14291 / NCTC 11154) (Bacteroides vulgatus).